The following is a 23-amino-acid chain: NADP-dependent malic enzyme (23 aa).

This sequence belongs to the malic enzymes family. In terms of assembly, homotetramer.

It carries out the reaction (S)-malate + NADP(+) = pyruvate + CO2 + NADPH. It catalyses the reaction oxaloacetate + H(+) = pyruvate + CO2. The protein is NADP-dependent malic enzyme of Populus euphratica (Euphrates poplar).